The primary structure comprises 452 residues: MEDLVLDNNTKNIYNKRFFISTWGCQMNEEDSEKISGLLKGIGYTRTDIRDEADVVIFNTCCVRENAEQKVYGHLGELKALKRKNPNLILIVTGCMMQQKGMPEKVMEKFPHVDIIAGTYNSYKLPEYIERVKTEGNSIIEIWDKEKGIVEGLPVDRKSDIKAFVTIMYGCNNFCSYCIVPYVRGRERSRDPQNIIDEIKDLVSKGYKEITLLGQNVNSYGKGLEPEINFATLLRMVNKIDGLERIRFMTSHPKDVSDELIKAMAECEKVCEQGHFALQSGSTEILQKMNRKYTREDYLTLVKKLRKAMPNVGISTDIIIGYPGETEKDFEDTLSIVKEIEFDSAFTFIYSKREGTPAAKLEDQVPEDVKHTRFNKLVEAVNEIMARKNKEFEGKTVEVLVEGPSKNDDTKLMGRTRSGKLVNFNGCLDQVGKLVNIKITKANSFSLTGEII.

The region spanning 16 to 134 (KRFFISTWGC…LPEYIERVKT (119 aa)) is the MTTase N-terminal domain. Cys-25, Cys-61, Cys-95, Cys-171, Cys-175, and Cys-178 together coordinate [4Fe-4S] cluster. A Radical SAM core domain is found at 157 to 387 (RKSDIKAFVT…VEAVNEIMAR (231 aa)). Residues 390 to 452 (KEFEGKTVEV…NSFSLTGEII (63 aa)) form the TRAM domain.

This sequence belongs to the methylthiotransferase family. MiaB subfamily. In terms of assembly, monomer. The cofactor is [4Fe-4S] cluster.

It localises to the cytoplasm. It catalyses the reaction N(6)-dimethylallyladenosine(37) in tRNA + (sulfur carrier)-SH + AH2 + 2 S-adenosyl-L-methionine = 2-methylsulfanyl-N(6)-dimethylallyladenosine(37) in tRNA + (sulfur carrier)-H + 5'-deoxyadenosine + L-methionine + A + S-adenosyl-L-homocysteine + 2 H(+). Its function is as follows. Catalyzes the methylthiolation of N6-(dimethylallyl)adenosine (i(6)A), leading to the formation of 2-methylthio-N6-(dimethylallyl)adenosine (ms(2)i(6)A) at position 37 in tRNAs that read codons beginning with uridine. The protein is tRNA-2-methylthio-N(6)-dimethylallyladenosine synthase of Clostridium novyi (strain NT).